We begin with the raw amino-acid sequence, 248 residues long: Aspartate/glutamate leucyltransferase (248 aa).

It belongs to the R-transferase family. Bpt subfamily.

The protein resides in the cytoplasm. It carries out the reaction N-terminal L-glutamyl-[protein] + L-leucyl-tRNA(Leu) = N-terminal L-leucyl-L-glutamyl-[protein] + tRNA(Leu) + H(+). The catalysed reaction is N-terminal L-aspartyl-[protein] + L-leucyl-tRNA(Leu) = N-terminal L-leucyl-L-aspartyl-[protein] + tRNA(Leu) + H(+). Its function is as follows. Functions in the N-end rule pathway of protein degradation where it conjugates Leu from its aminoacyl-tRNA to the N-termini of proteins containing an N-terminal aspartate or glutamate. The polypeptide is Aspartate/glutamate leucyltransferase (Methylorubrum populi (strain ATCC BAA-705 / NCIMB 13946 / BJ001) (Methylobacterium populi)).